The chain runs to 122 residues: Large ribosomal subunit protein bL17 (122 aa).

The protein belongs to the bacterial ribosomal protein bL17 family. As to quaternary structure, part of the 50S ribosomal subunit. Contacts protein L32.

In Staphylococcus aureus (strain Mu3 / ATCC 700698), this protein is Large ribosomal subunit protein bL17.